The primary structure comprises 54 residues: Potassium channel toxin alpha-KTx 14.x (54 aa).

Positions 1–23 (MKIFFAILLILAVCSMAIWTVNG) are cleaved as a signal peptide. Intrachain disulfides connect Cys30/Cys46, Cys36/Cys51, and Cys40/Cys53.

The protein belongs to the short scorpion toxin superfamily. Potassium channel inhibitor family. Alpha-KTx 14 subfamily. Expressed by the venom gland.

The protein localises to the secreted. Potassium channels inhibitor. The sequence is that of Potassium channel toxin alpha-KTx 14.x from Olivierus martensii (Manchurian scorpion).